We begin with the raw amino-acid sequence, 1116 residues long: Phosphatidylinositol 4-kinase beta 2 (1116 aa).

Residues 1–143 form the PIK helical domain; the sequence is MQMAQFLSLV…SRIQEKCQIA (143 aa). 8 tandem repeats follow at residues 210–229, 242–261, 264–283, 286–304, 307–326, 329–348, 351–370, and 378–396. Positions 210-507 are 11 X 20 AA approximate repeats (PPC); that stretch reads ADDNKIFKRL…FRDRDRSVED (298 aa). The span at 394–404 shows a compositional bias: basic and acidic residues; the sequence is EKRNGNERNET. The disordered stretch occupies residues 394–417; the sequence is EKRNGNERNETDETVYTDETSGED. Residues 405 to 415 show a composition bias toward acidic residues; that stretch reads DETVYTDETSG. Repeat unit 9 spans residues 418–436; it reads NGREGFFKKLFKEKFEDKP. A phosphoserine mark is found at S447 and S452. Repeat copies occupy residues 452-470 and 488-507. Disordered stretches follow at residues 515-540 and 794-813; these read KYKEKCPGSPKPQNNTPSKKPPLPNN and GEAPPGLPLKGAGQDSSDAQ. Positions 830–1101 constitute a PI3K/PI4K catalytic domain; sequence EFWEGKRLRI…LISSSLDAWR (272 aa). A G-loop region spans residues 836–842; that stretch reads RLRIRKD. Residues 964–972 are catalytic loop; sequence QIKDRHNGN. Residues 983 to 1007 are activation loop; it reads HIDFGFMLSNSPGGVNFESAPFKLT.

Belongs to the PI3/PI4-kinase family. Type III PI4K subfamily.

The protein localises to the cell membrane. Its subcellular location is the golgi apparatus. It is found in the trans-Golgi network. It localises to the cytoplasmic vesicle membrane. The enzyme catalyses a 1,2-diacyl-sn-glycero-3-phospho-(1D-myo-inositol) + ATP = a 1,2-diacyl-sn-glycero-3-phospho-(1D-myo-inositol 4-phosphate) + ADP + H(+). Acts on phosphatidylinositol (PtdIns) in the first committed step in the production of the second messenger inositol-1,4,5-trisphosphate. Necessary for proper organization of the trans-Golgi network (TGN) and post-Golgi secretion in root hairs. Together with PI4KB1, required during polarized root hair expansion and pollen tube elongation. Functions redundantly with PI4KB1 upstream of the cold response phosphoinositide-dependent phospholipase C (PI-PLC) pathway. This is Phosphatidylinositol 4-kinase beta 2 (PI4KB2) from Arabidopsis thaliana (Mouse-ear cress).